A 318-amino-acid chain; its full sequence is NADH-ubiquinone oxidoreductase chain 1 (318 aa).

8 helical membrane passes run 2–22, 69–89, 100–120, 146–166, 171–191, 231–251, 253–273, and 285–305; these read FMIN…FLTL, LLFT…WLPL, LGVL…LWSG, LAII…TNLI, HMWL…STLA, IMMM…TPLV, GIYT…FLWI, and LMHL…MWHV.

The protein belongs to the complex I subunit 1 family. As to quaternary structure, core subunit of respiratory chain NADH dehydrogenase (Complex I) which is composed of 45 different subunits.

Its subcellular location is the mitochondrion inner membrane. It catalyses the reaction a ubiquinone + NADH + 5 H(+)(in) = a ubiquinol + NAD(+) + 4 H(+)(out). Its function is as follows. Core subunit of the mitochondrial membrane respiratory chain NADH dehydrogenase (Complex I) which catalyzes electron transfer from NADH through the respiratory chain, using ubiquinone as an electron acceptor. Essential for the catalytic activity and assembly of complex I. This Myrmecophaga tridactyla (Giant anteater) protein is NADH-ubiquinone oxidoreductase chain 1 (MT-ND1).